A 461-amino-acid chain; its full sequence is uncharacterized protein (461 aa).

Residues 1-19 (MEKCSHESGRHSAENDGKY) show a composition bias toward basic and acidic residues. The interval 1–21 (MEKCSHESGRHSAENDGKYDI) is disordered.

The protein belongs to the CapA family.

In terms of biological role, could be involved in the biosynthesis of a cell wall component. This is an uncharacterized protein from Sinorhizobium fredii (strain NBRC 101917 / NGR234).